Here is a 118-residue protein sequence, read N- to C-terminus: Large ribosomal subunit protein bL20 (118 aa).

It belongs to the bacterial ribosomal protein bL20 family.

In terms of biological role, binds directly to 23S ribosomal RNA and is necessary for the in vitro assembly process of the 50S ribosomal subunit. It is not involved in the protein synthesizing functions of that subunit. This is Large ribosomal subunit protein bL20 from Psychrobacter arcticus (strain DSM 17307 / VKM B-2377 / 273-4).